The following is a 269-amino-acid chain: Diphthine synthase (269 aa).

S-adenosyl-L-methionine is bound by residues L10, D87, V90, 115-116 (SI), L166, A209, and H234.

It belongs to the diphthine synthase family. As to quaternary structure, homodimer.

It carries out the reaction 2-[(3S)-amino-3-carboxypropyl]-L-histidyl-[translation elongation factor 2] + 3 S-adenosyl-L-methionine = diphthine-[translation elongation factor 2] + 3 S-adenosyl-L-homocysteine + 3 H(+). It functions in the pathway protein modification; peptidyl-diphthamide biosynthesis. In terms of biological role, S-adenosyl-L-methionine-dependent methyltransferase that catalyzes the trimethylation of the amino group of the modified target histidine residue in translation elongation factor 2 (EF-2), to form an intermediate called diphthine. The three successive methylation reactions represent the second step of diphthamide biosynthesis. The sequence is that of Diphthine synthase from Pyrococcus furiosus (strain ATCC 43587 / DSM 3638 / JCM 8422 / Vc1).